The chain runs to 595 residues: Phosphomethylpyrimidine synthase (595 aa).

Residues 97-120 (GRDVRPEDNGFTKDDDPRAAREVF) show a composition bias toward basic and acidic residues. A disordered region spans residues 97–134 (GRDVRPEDNGFTKDDDPRAAREVFPRTSSHKPLRAKKG). Over residues 124-133 (SSHKPLRAKK) the composition is skewed to basic residues. Substrate-binding positions include Asn202, Met231, Tyr260, His296, 316–318 (SRG), 357–360 (DGLR), and Glu396. His400 contacts Zn(2+). Residue Tyr423 participates in substrate binding. His464 lines the Zn(2+) pocket. Positions 544, 547, and 552 each coordinate [4Fe-4S] cluster.

It belongs to the ThiC family. [4Fe-4S] cluster is required as a cofactor.

It carries out the reaction 5-amino-1-(5-phospho-beta-D-ribosyl)imidazole + S-adenosyl-L-methionine = 4-amino-2-methyl-5-(phosphooxymethyl)pyrimidine + CO + 5'-deoxyadenosine + formate + L-methionine + 3 H(+). The protein operates within cofactor biosynthesis; thiamine diphosphate biosynthesis. In terms of biological role, catalyzes the synthesis of the hydroxymethylpyrimidine phosphate (HMP-P) moiety of thiamine from aminoimidazole ribotide (AIR) in a radical S-adenosyl-L-methionine (SAM)-dependent reaction. The polypeptide is Phosphomethylpyrimidine synthase (Halalkalibacterium halodurans (strain ATCC BAA-125 / DSM 18197 / FERM 7344 / JCM 9153 / C-125) (Bacillus halodurans)).